We begin with the raw amino-acid sequence, 644 residues long: Biosynthetic arginine decarboxylase (644 aa).

Lys-100 bears the N6-(pyridoxal phosphate)lysine mark. 282-292 (CDVGGGLAIDY) lines the substrate pocket.

This sequence belongs to the Orn/Lys/Arg decarboxylase class-II family. SpeA subfamily. The cofactor is Mg(2+). Requires pyridoxal 5'-phosphate as cofactor.

It catalyses the reaction L-arginine + H(+) = agmatine + CO2. In terms of biological role, catalyzes the biosynthesis of agmatine from arginine. This Gloeobacter violaceus (strain ATCC 29082 / PCC 7421) protein is Biosynthetic arginine decarboxylase.